Here is a 290-residue protein sequence, read N- to C-terminus: Aquaporin-3 (290 aa).

Topologically, residues 1-24 (MGRQKELVTRCGEMLHIRYRLLRQ) are cytoplasmic. The helical transmembrane segment at 25 to 42 (ALAECLGTLILVMFGCGS) threads the bilayer. At 43-56 (VAQVVLSRGTHGGF) the chain is on the extracellular side. The helical transmembrane segment at 57 to 74 (LTINLAFGFAVTLGILVA) threads the bilayer. The Cytoplasmic portion of the chain corresponds to 75 to 78 (GQVS). Residues 79–92 (GAHLNPAVTFAMCF) constitute an intramembrane region (discontinuously helical). Residues 83-85 (NPA) carry the NPA 1 motif. Topologically, residues 93–100 (LAREPWIK) are cytoplasmic. Residues 101-121 (LPVYTLAQTLGAFLGAGIIFG) traverse the membrane as a helical segment. Topologically, residues 122–159 (LYYDAIWAFANNQLIVSGPNGTAGIFATYPSGHLDMVN) are extracellular. The N-linked (GlcNAc...) asparagine glycan is linked to Asn-141. Residues 160–177 (GFFDQFIGTASLIVCVLA) traverse the membrane as a helical segment. Over 178 to 189 (IVDPNNNPVPRG) the chain is Cytoplasmic. The helical transmembrane segment at 190 to 206 (LEAFTVGLVVLVIGTSM) threads the bilayer. Over 207-210 (GFNS) the chain is Extracellular. The discontinuously helical intramembrane region spans 211-224 (GYAVNPARDFGPRL). Positions 215–217 (NPA) match the NPA 2 motif. At 225 to 242 (FTAIAGWGSEVFTTGRHW) the chain is on the extracellular side. The chain crosses the membrane as a helical span at residues 243-264 (WWVPIASPLLGSIAGVFVYQLM). At 265-290 (IGCHLEPPPPSTDEENVKLSQVKHKE) the chain is on the cytoplasmic side.

This sequence belongs to the MIP/aquaporin (TC 1.A.8) family. Homotetramer; each monomer provides an independent glycerol/water pore. Could also exist in other oligomeric states. Highly expressed in stomach and spleen, with lower expression in kidney and lung.

Its subcellular location is the cell membrane. The protein resides in the basolateral cell membrane. It catalyses the reaction glycerol(in) = glycerol(out). It carries out the reaction H2O(in) = H2O(out). The catalysed reaction is urea(in) = urea(out). The enzyme catalyses H2O2(out) = H2O2(in). Aquaglyceroporins form homotetrameric transmembrane channels, with each monomer independently mediating glycerol and water transport across the plasma membrane along their osmotic gradient. Could also be permeable to urea. Also participates in cell permeability to H2O2 and H2O2-mediated signaling. In skin, transports glycerol to the epidermis and stratum corneum, where it maintains hydration, elasticity, and supports lipid biosynthesis for barrier repair. In kidney, contributes to the reabsorption of water, helping the body maintain proper fluid balance. This Sus scrofa (Pig) protein is Aquaporin-3.